The primary structure comprises 199 residues: NADH-quinone oxidoreductase subunit B 2 (199 aa).

[4Fe-4S] cluster is bound by residues Cys78, Cys79, Cys143, and Cys173.

Belongs to the complex I 20 kDa subunit family. NDH-1 is composed of 14 different subunits. Subunits NuoB, C, D, E, F, and G constitute the peripheral sector of the complex. Requires [4Fe-4S] cluster as cofactor.

It is found in the cell inner membrane. It carries out the reaction a quinone + NADH + 5 H(+)(in) = a quinol + NAD(+) + 4 H(+)(out). NDH-1 shuttles electrons from NADH, via FMN and iron-sulfur (Fe-S) centers, to quinones in the respiratory chain. The immediate electron acceptor for the enzyme in this species is believed to be ubiquinone. Couples the redox reaction to proton translocation (for every two electrons transferred, four hydrogen ions are translocated across the cytoplasmic membrane), and thus conserves the redox energy in a proton gradient. The chain is NADH-quinone oxidoreductase subunit B 2 from Rhodopseudomonas palustris (strain BisB5).